The primary structure comprises 185 residues: V-type ATP synthase subunit E (185 aa).

It belongs to the V-ATPase E subunit family.

Functionally, produces ATP from ADP in the presence of a proton gradient across the membrane. The protein is V-type ATP synthase subunit E of Deinococcus geothermalis (strain DSM 11300 / CIP 105573 / AG-3a).